The chain runs to 119 residues: Autophagy-related protein 8h (119 aa).

A lipid anchor (Phosphatidylethanolamine amidated glycine) is attached at G119.

Belongs to the ATG8 family. As to quaternary structure, interacts with ATG4. Interacts with ATI1. In terms of processing, gly-119 forms then a thioester bond with the 'Cys-558' of ATG7 (E1-like activating enzyme) before being transferred to the 'Cys-258' of ATG3 (the specific E2 conjugating enzyme), in order to be finally amidated with phosphatidylethanolamine. This lipid modification anchors ATG8 to autophagosomes. In terms of tissue distribution, constitutively expressed.

It is found in the cytoplasmic vesicle. The protein resides in the autophagosome membrane. It localises to the vacuole membrane. Its subcellular location is the cytoplasm. The protein localises to the cytoskeleton. Functionally, ubiquitin-like modifier involved in autophagosomes formation. May mediate the delivery of the autophagosomes to the vacuole via the microtubule cytoskeleton. The sequence is that of Autophagy-related protein 8h (ATG8H) from Arabidopsis thaliana (Mouse-ear cress).